Consider the following 350-residue polypeptide: Peroxidase 24 (350 aa).

Residues 1–27 form the signal peptide; that stretch reads MANKSLEIRFLFPLVLFLVVKLLCVDG. Disulfide bonds link Cys-55–Cys-135, Cys-88–Cys-93, Cys-141–Cys-346, and Cys-221–Cys-253. Asn-73 carries an N-linked (GlcNAc...) asparagine glycan. His-86 acts as the Proton acceptor in catalysis. Positions 87, 90, 92, 94, and 96 each coordinate Ca(2+). Position 184 (Pro-184) interacts with substrate. An N-linked (GlcNAc...) asparagine glycan is attached at Asn-189. A heme b-binding site is contributed by His-214. Thr-215 is a Ca(2+) binding site. N-linked (GlcNAc...) asparagine glycosylation is present at Asn-230. Ca(2+) is bound by residues Asp-269 and Asp-277.

This sequence belongs to the peroxidase family. Classical plant (class III) peroxidase subfamily. Heme b serves as cofactor. Requires Ca(2+) as cofactor.

The protein resides in the secreted. It catalyses the reaction 2 a phenolic donor + H2O2 = 2 a phenolic radical donor + 2 H2O. Functionally, removal of H(2)O(2), oxidation of toxic reductants, biosynthesis and degradation of lignin, suberization, auxin catabolism, response to environmental stresses such as wounding, pathogen attack and oxidative stress. These functions might be dependent on each isozyme/isoform in each plant tissue. This chain is Peroxidase 24 (PER24), found in Arabidopsis thaliana (Mouse-ear cress).